The following is a 300-amino-acid chain: Fluorinase (300 aa).

S-adenosyl-L-methionine is bound by residues aspartate 16, 21–23, tyrosine 77, serine 158, aspartate 211, asparagine 216, 270–271, and 278–280; these read DDS, SR, and RNA.

It belongs to the SAM hydrolase / SAM-dependent halogenase family. In terms of assembly, homohexamer.

The enzyme catalyses fluoride + S-adenosyl-L-methionine = 5'-deoxy-5'-fluoroadenosine + L-methionine. It carries out the reaction chloride + S-adenosyl-L-methionine = 5'-chloro-5'-deoxyadenosine + L-methionine. Its activity is regulated as follows. Activity is severely inhibited by 1 mM Cu(2+) or Zn(2+). Its function is as follows. Catalyzes the formation of a C-F bond by combining S-adenosyl-L-methionine (SAM) and fluoride to generate 5'-fluoro-5'-deoxyadenosine (5'-FDA) and L-methionine. Probably involved in fluoroacetate (FAc) and 4-fluorothreonine (4-FT) biosynthesis. In vitro, can also catalyze the conversion of chloride and SAM to 5'-chloro-5'-deoxyadenosine (5'-CIDA) and L-methionine in the presence of L-amino acid oxidase. This chain is Fluorinase, found in Nocardia brasiliensis (strain ATCC 700358 / HUJEG-1).